Reading from the N-terminus, the 471-residue chain is Glutamate--tRNA ligase (471 aa).

Residues 9–19 (PSPTGYLHVGG) carry the 'HIGH' region motif. Zn(2+) is bound by residues Cys98, Cys100, Cys125, and His127. A 'KMSKS' region motif is present at residues 237–241 (KLSKR). Lys240 contributes to the ATP binding site.

Belongs to the class-I aminoacyl-tRNA synthetase family. Glutamate--tRNA ligase type 1 subfamily. Monomer. The cofactor is Zn(2+).

It is found in the cytoplasm. The catalysed reaction is tRNA(Glu) + L-glutamate + ATP = L-glutamyl-tRNA(Glu) + AMP + diphosphate. Catalyzes the attachment of glutamate to tRNA(Glu) in a two-step reaction: glutamate is first activated by ATP to form Glu-AMP and then transferred to the acceptor end of tRNA(Glu). The polypeptide is Glutamate--tRNA ligase (Salmonella enteritidis PT4 (strain P125109)).